We begin with the raw amino-acid sequence, 185 residues long: Ribosome-recycling factor (185 aa).

The protein belongs to the RRF family.

Its subcellular location is the cytoplasm. Responsible for the release of ribosomes from messenger RNA at the termination of protein biosynthesis. May increase the efficiency of translation by recycling ribosomes from one round of translation to another. In Xylella fastidiosa (strain Temecula1 / ATCC 700964), this protein is Ribosome-recycling factor.